Here is a 572-residue protein sequence, read N- to C-terminus: Sulfate adenylyltransferase (572 aa).

An N-terminal region spans residues 1–169; sequence MANAPHGGVL…IEAVNKLNHY (169 aa). The tract at residues 170 to 393 is catalytic; the sequence is DYVALRYTPA…LRESNPPRAT (224 aa). Residue Gln197 participates in sulfate binding. ATP-binding positions include 197 to 200 and 291 to 294; these read QTRN and GRDH. Active-site residues include Thr198, Arg199, and Asn200. A sulfate-binding site is contributed by Arg199. Residue Ala295 participates in sulfate binding. An ATP-binding site is contributed by Val333. The interval 394–572 is allosteric regulation domain; adenylyl-sulfate kinase-like; it reads QGFTIFLTGY…LESQGFLERQ (179 aa). 3'-phosphoadenylyl sulfate is bound by residues 433–436, Arg450, 476–477, and Arg514; these read DTVR and IA.

This sequence in the N-terminal section; belongs to the sulfate adenylyltransferase family. In the C-terminal section; belongs to the APS kinase family. As to quaternary structure, homohexamer. Dimer of trimers.

Its subcellular location is the cytoplasm. The catalysed reaction is sulfate + ATP + H(+) = adenosine 5'-phosphosulfate + diphosphate. The protein operates within sulfur metabolism; hydrogen sulfide biosynthesis; sulfite from sulfate: step 1/3. With respect to regulation, allosterically inhibited by 3'-phosphoadenosine 5'-phosphosulfate (PAPS). Its function is as follows. Catalyzes the first intracellular reaction of sulfate assimilation, forming adenosine-5'-phosphosulfate (APS) from inorganic sulfate and ATP. Plays an important role in sulfate activation as a component of the biosynthesis pathway of sulfur-containing amino acids. This is Sulfate adenylyltransferase from Penicillium chrysogenum (Penicillium notatum).